Reading from the N-terminus, the 294-residue chain is Elongation factor Ts (294 aa).

Positions 79 to 82 are involved in Mg(2+) ion dislocation from EF-Tu; it reads TDFV.

This sequence belongs to the EF-Ts family.

The protein resides in the cytoplasm. Its function is as follows. Associates with the EF-Tu.GDP complex and induces the exchange of GDP to GTP. It remains bound to the aminoacyl-tRNA.EF-Tu.GTP complex up to the GTP hydrolysis stage on the ribosome. This is Elongation factor Ts from Geobacillus sp. (strain WCH70).